The sequence spans 515 residues: Organic cation/carnitine transporter 5 (515 aa).

At 1–43 (MADSLAPLLPTHIEEDEDTSSPLTFDKILEKSLSDFGFSQFLQ) the chain is on the cytoplasmic side. The helical transmembrane segment at 44 to 64 (IVLVGLALTFDSQQIFITVFT) threads the bilayer. Residues 65-124 (DAYPTWHCLDHTICNPATTDICKIPRSAWDWDGGFKGKSVISEFDLECSSSFLRSLPSST) lie on the Extracellular side of the membrane. The chain crosses the membrane as a helical span at residues 125-145 (FYVGSIVGGVVLAMIPDGSLG). Over 146–149 (RKQL) the chain is Cytoplasmic. The helical transmembrane segment at 150-172 (LFFSSFAMSLTGISIFLSSNIWI) threads the bilayer. Residues 173–177 (YSFLK) lie on the Extracellular side of the membrane. A helical transmembrane segment spans residues 178–195 (FVIGFARSQTGTYALVLI). 195-202 (ISERISTK) is an ATP binding site. Over 196 to 208 (SERISTKWRPRAT) the chain is Cytoplasmic. The chain crosses the membrane as a helical span at residues 209–229 (MVPFTLFVLGFMSLSGIAYLV). The Extracellular portion of the chain corresponds to 230–235 (RHASWK). Residues 236-256 (VLYLCTSIPAGIHSIFIYFFA) form a helical membrane-spanning segment. Over 257–320 (LESPRWLHLE…LFIIKWAFRR (64 aa)) the chain is Cytoplasmic. A helical transmembrane segment spans residues 321 to 341 (VTLVMIIMFGLGMSYYGVPLA). Residues 342 to 350 (VRDIKVNIY) are Extracellular-facing. A helical transmembrane segment spans residues 351 to 371 (MSEALNAMVELPTFVVTPILL). Residues 372–379 (EQFSRRSS) are Cytoplasmic-facing. Residues 380 to 400 (VLVNCLIGGASGVLCFVMSLY) form a helical membrane-spanning segment. Topologically, residues 401 to 411 (GRTKIAFALEL) are extracellular. The helical transmembrane segment at 412-432 (GSFFCARIGFNLMAIYLVELF) threads the bilayer. The Cytoplasmic segment spans residues 433-441 (PTCVRNSAT). The chain crosses the membrane as a helical span at residues 442–462 (MMLRQALVVGGACCPLIASLG). Residues 463–467 (RNVPS) lie on the Extracellular side of the membrane. A helical membrane pass occupies residues 468–488 (LSFAVFGFAMSGLGLFALLLP). Over 489 to 515 (ETKGLSLCDTMEEQEQRDQALKTSHSC) the chain is Cytoplasmic.

Belongs to the major facilitator (TC 2.A.1) superfamily. Organic cation transporter (TC 2.A.1.19) family. As to expression, mostly expressed in leaves and siliques, and, to a lower extent, in roots, stems and flowers.

It is found in the vacuole membrane. High affinity carnitine transporter involved in the active cellular uptake of carnitine. Also transports organic cations. The protein is Organic cation/carnitine transporter 5 (OCT5) of Arabidopsis thaliana (Mouse-ear cress).